Here is a 493-residue protein sequence, read N- to C-terminus: Ferruginol synthase 1 (493 aa).

A helical membrane pass occupies residues 2 to 22 (DSFPLLAALFFILAATWFISF). Heme is bound at residue cysteine 437.

This sequence belongs to the cytochrome P450 family. It depends on heme as a cofactor. As to expression, expressed in leaf glandular trichomes.

It is found in the membrane. The enzyme catalyses abieta-8,11,13-triene + reduced [NADPH--hemoprotein reductase] + O2 = ferruginol + oxidized [NADPH--hemoprotein reductase] + H2O + H(+). It catalyses the reaction ferruginol + reduced [NADPH--hemoprotein reductase] + O2 = 11-hydroxyferruginol + oxidized [NADPH--hemoprotein reductase] + H2O + H(+). The catalysed reaction is miltiradiene + 2 reduced [NADPH--hemoprotein reductase] + 2 O2 = 11-oxomiltiradiene + 2 oxidized [NADPH--hemoprotein reductase] + 3 H2O + 2 H(+). The protein operates within secondary metabolite biosynthesis; terpenoid biosynthesis. In terms of biological role, monooxygenase involved in the biosynthesis of labdane-related diterpenes natural products. Catalyzes the oxidation of abietatriene to produce ferruginol. Catalyzes the oxidation of ferruginol at C-12 to produce 11-hydroxyferruginol. Ferruginol and 11-hydroxyferruginol are intermediates in the biosynthesis of carnosate, a potent antioxidant. May also convert miltiradiene into 11-oxomiltiradiene. The polypeptide is Ferruginol synthase 1 (Rosmarinus officinalis (Rosemary)).